The primary structure comprises 562 residues: Matrix metalloproteinase-25 (562 aa).

The signal sequence occupies residues 1–21; the sequence is MRLRLRLLALLLLLLAPPARA. The propeptide occupies 22–107; sequence PKPSAQDVSL…VAGLVRRRRR (86 aa). Residues 88–95 carry the Cysteine switch motif; the sequence is PRCSLPDV. Residues Cys-90 and His-233 each coordinate Zn(2+). The active site involves Glu-234. Residues His-237 and His-243 each contribute to the Zn(2+) site. The tract at residues 278–313 is disordered; that stretch reads LYGKAPQTPYDKPTRKPLAPPPQPPASPTHSPSFPI. Pro residues predominate over residues 295 to 304; sequence LAPPPQPPAS. Hemopexin repeat units follow at residues 314 to 363, 367 to 412, 413 to 461, and 462 to 508; these read PDRC…WEGL, VRVV…GLPP, GEEV…EGAP, and PSPD…WLDC. Cys-317 and Cys-508 are disulfide-bonded. Residues 490–526 form a disordered region; it reads SIKTEPDAPQPMGPNWLDCPAPSSGPRAPRPPKATPV. Ala-539 carries the GPI-anchor amidated alanine lipid modification. Positions 540–562 are cleaved as a propeptide — removed in mature form; the sequence is AGRWPAPIPLLLLPLLVGGVASR.

The protein belongs to the peptidase M10A family. The cofactor is Zn(2+). It depends on Ca(2+) as a cofactor. The precursor is cleaved by a furin endopeptidase. Expressed predominantly in leukocytes, lung and spleen. Expressed also in colon carcinoma, astrocytoma and glioblastomas.

The protein resides in the cell membrane. It is found in the secreted. The protein localises to the extracellular space. It localises to the extracellular matrix. Functionally, may activate progelatinase A. The protein is Matrix metalloproteinase-25 (MMP25) of Homo sapiens (Human).